Reading from the N-terminus, the 543-residue chain is Putative inorganic phosphate export protein YjbB (543 aa).

The next 9 membrane-spanning stretches (helical) occupy residues 1–21 (MLTLLHLLSAVALLVWGTHIV), 48–68 (FCAGIGVTALVQSSNATTMLV), 76–96 (LVALAPALVIVLGADVGTALM), 99–119 (ILTFDLSWLSPLLIFIGVIFF), 134–154 (GIGLGLILLALELIVQAVTPI), 175–195 (ALIGAMFAIISYSSLAAVLLT), 196–216 (ATLTAAGIISFPVALCLVIGA), 240–260 (LGSLLFKLVGSLIILPFVHLL), and 274–294 (LVIYFHVFYNLVRCLVMLPFV).

It belongs to the YjbB family.

The protein localises to the cell inner membrane. It catalyses the reaction phosphate(in) = phosphate(out). Functionally, might be involved in phosphate export. Overproduction of YjbB reduces the elevated levels of polyphosphate (polyP) in a phoU mutant that accumulates 1000-fold higher levels of polyP than the wild type, suggesting that YjbB exports excess intracellular phosphate (Pi) in the phoU mutant and thus reduces the levels of polyP. The protein is Putative inorganic phosphate export protein YjbB (yjbB) of Escherichia coli (strain K12).